Reading from the N-terminus, the 135-residue chain is Sex-regulated protein janus-A (135 aa).

Residue Lys37 participates in substrate binding. His63 (proton acceptor) is an active-site residue. 104–106 (SQG) is a substrate binding site.

The protein belongs to the janus family.

Functionally, janA and janB regulate somatic sex differentiation. The protein is Sex-regulated protein janus-A (janA) of Drosophila erecta (Fruit fly).